Consider the following 618-residue polypeptide: Ubiquitin carboxyl-terminal hydrolase 2 (618 aa).

The segment at Met-1–Glu-213 is necessary for interaction with MDM4. Disordered stretches follow at residues Val-54–Gly-112 and Arg-246–Lys-274. A compositionally biased stretch (basic and acidic residues) spans Lys-90–Glu-100. A compositionally biased stretch (polar residues) spans Gly-255–Lys-274. In terms of domain architecture, USP spans Ala-280–Ala-612. Cys-289 serves as the catalytic Nucleophile. The necessary for interaction with MDM4 stretch occupies residues Tyr-416–Lys-516. Cys-438, Cys-441, Cys-489, and Cys-492 together coordinate Zn(2+). His-570 (proton acceptor) is an active-site residue.

The protein belongs to the peptidase C19 family. USP2 subfamily. In terms of assembly, homooligomer. Found in trimeric complex with MDM2 and MDM4 and USP2. Interacts with CCND1; the interaction is direct and promotes its stabilization by antagonizing ubiquitin-dependent degradation. Interacts (via N-terminus and C-terminus) with MDM2. Interacts with MDM4. Interacts with PER1. Interacts with KCNQ1; counteracts the NEDD4L-specific down-regulation of I(Ks) and restores plasma membrane localization of KCNQ1. Isoform 4: Interacts with NHERF4 and CLTC. Expressed in mesangial cells of the kidney. Isoform 1 and isoform 2 are expressed in elongated spermatids; the shorter form appearing earlier than the longer form (at protein level). Isoform 1 and isoform 2 are expressed in early round spermatids of the testis. Isoform 1 is expressed in muscle and heart. Isoform 2 is expressed in muscle, lung, heart, brain, liver and ovary. During muscle differentiation, isoform 1 expression increases before the onset of membrane fusion and decreases as the myogenic processes proceeded; un counterpart, isoform 2 expression remains low until the burst of membrane fusion but increases thereafter.

It localises to the cytoplasm. The protein localises to the perinuclear region. Its subcellular location is the nucleus. The protein resides in the membrane. The enzyme catalyses Thiol-dependent hydrolysis of ester, thioester, amide, peptide and isopeptide bonds formed by the C-terminal Gly of ubiquitin (a 76-residue protein attached to proteins as an intracellular targeting signal).. With respect to regulation, cleavage is inhibited by ubiquitin in a dosage-dependent manner. Cleavage is blocked by ubiquitin aldehyde. In terms of biological role, hydrolase that deubiquitinates polyubiquitinated target proteins such as MDM2, MDM4 and CCND1. Isoform 1 and isoform 2 possess both ubiquitin-specific peptidase and isopeptidase activities. Deubiquitinates MDM2 without reversing MDM2-mediated p53/TP53 ubiquitination and thus indirectly promotes p53/TP53 degradation and limits p53 activity. Has no deubiquitinase activity against p53/TP53. Prevents MDM2-mediated degradation of MDM4. Plays a role in the G1/S cell-cycle progression in normal and cancer cells. Regulates the circadian clock by modulating its intrinsic circadian rhythm and its capacity to respond to external cues. Associates with clock proteins and deubiquitinates core clock component PER1 but does not affect its overall stability. Regulates the nucleocytoplasmic shuttling and nuclear retention of PER1 and its repressive role on the clock transcription factors CLOCK and BMAL1. Plays a role in the regulation of myogenic differentiation of embryonic muscle cells. Circadian clock output effector that regulates Ca(2+) absorption in the small intestine. Probably functions by regulating protein levels of the membrane scaffold protein NHERF4 in a rhythmic manner, and is therefore likely to control Ca(2+) membrane permeability mediated by the Ca(2+) channel TRPV6 in the intestine. This Rattus norvegicus (Rat) protein is Ubiquitin carboxyl-terminal hydrolase 2 (Usp2).